A 156-amino-acid chain; its full sequence is Endogenous retrovirus group K member 9 Pro protein (156 aa).

The Peptidase A2 domain maps to 21–96 (FEGLVDTGAD…IPLNLWGRDL (76 aa)). Residue Asp26 is part of the active site. The region spanning 111–156 (YSPTSQKIMTKRGYIPGKGLGKNEDGIKIPFEAKINQKREGIGYPF) is the G-patch domain.

It belongs to the peptidase A2 family. HERV class-II K(HML-2) subfamily. In terms of assembly, active as a homodimer. Autoproteolytically processed at the N-terminus. Expected C-terminal autoprocessing not detected. The sequence shown is that of the processed Pro protein.

The enzyme catalyses Processing at the authentic HIV-1 PR recognition site and release of the mature p17 matrix and the p24 capsid protein, as a result of the cleavage of the -SQNY-|-PIVQ- cleavage site.. In terms of biological role, retroviral proteases have roles in the processing of the primary translation products and the maturation of the viral particle. Endogenous Pro proteins may have kept, lost or modified their original function during evolution. In Homo sapiens (Human), this protein is Endogenous retrovirus group K member 9 Pro protein (ERVK-9).